Consider the following 238-residue polypeptide: MLCCMRRTKQVEKNDEDQKIEQDGIKPEDKAHKAATKIQASFRGHITRKKLKGEKKDDAQAAEAEANKKDEAPVADGVEKKGEGTTATEAAPATGSKPDEPGKAGETPSEEKKGEGDAATEQAAPQAPASSEEKAGSAETESATKASTDNSPSSKAEDAPAKEEPKQADVPAAVTAAAATTPAAEDAAAKATAQPPTETGESSQAEENIEAVDETKPKESARQDEGKEEEPEADQEHA.

The tract at residues 1–238 (MLCCMRRTKQ…EEPEADQEHA (238 aa)) is disordered. S-palmitoyl cysteine attachment occurs at residues cysteine 3 and cysteine 4. The segment covering 9–32 (KQVEKNDEDQKIEQDGIKPEDKAH) has biased composition (basic and acidic residues). The IQ domain maps to 31–60 (AHKAATKIQASFRGHITRKKLKGEKKDDAQ). Serine 41 carries the phosphoserine; by PHK and PKC modification. Positions 54–83 (EKKDDAQAAEAEANKKDEAPVADGVEKKGE) are enriched in basic and acidic residues. Residues 84–95 (GTTATEAAPATG) show a composition bias toward low complexity. The segment covering 97 to 116 (KPDEPGKAGETPSEEKKGEG) has biased composition (basic and acidic residues). A compositionally biased stretch (low complexity) spans 119 to 130 (ATEQAAPQAPAS). Residues 139–154 (ETESATKASTDNSPSS) are compositionally biased toward polar residues. Serine 151, serine 153, and serine 154 each carry phosphoserine. Residues 155 to 167 (KAEDAPAKEEPKQ) are compositionally biased toward basic and acidic residues. Residues 168 to 199 (ADVPAAVTAAAATTPAAEDAAAKATAQPPTET) show a composition bias toward low complexity. Residue threonine 181 is modified to Phosphothreonine. Phosphoserine; by CK2 occurs at positions 202 and 203. Positions 213 to 225 (DETKPKESARQDE) are enriched in basic and acidic residues. Positions 226-238 (GKEEEPEADQEHA) are enriched in acidic residues.

The protein belongs to the neuromodulin family. In terms of assembly, identified in a complex containing FGFR4, NCAM1, CDH2, PLCG1, FRS2, SRC, SHC1, GAP43 and CTTN. Interacts (via IQ domain) with calmodulin. Binds calmodulin with a greater affinity in the absence of Ca(2+) than in its presence. Post-translationally, phosphorylated. Phosphorylation of this protein by a protein kinase C is specifically correlated with certain forms of synaptic plasticity. In terms of processing, palmitoylated by ZDHHC3. Palmitoylation is regulated by ARF6 and is essential for plasma membrane association and axonal and dendritic filopodia induction. Deacylated by LYPLA2.

It is found in the cell membrane. The protein localises to the cell projection. Its subcellular location is the growth cone membrane. The protein resides in the synapse. It localises to the filopodium membrane. It is found in the perikaryon. The protein localises to the dendrite. Its subcellular location is the axon. The protein resides in the cytoplasm. Functionally, this protein is associated with nerve growth. It is a major component of the motile 'growth cones' that form the tips of elongating axons. Plays a role in axonal and dendritic filopodia induction. The protein is Neuromodulin (GAP43) of Macaca fascicularis (Crab-eating macaque).